The primary structure comprises 67 residues: Conotoxin ArMLCL-012 (67 aa).

The signal sequence occupies residues 1–19; it reads MLCLPVFIILLLLASPAAS. Residues 20 to 45 constitute a propeptide that is removed on maturation; the sequence is NPLEKRIQSDLIRAALEDADTKNDPR. C64 carries the post-translational modification Cysteine amide.

The protein belongs to the conotoxin T superfamily. Contains 2 disulfide bonds that can be either 'C1-C3, C2-C4' or 'C1-C4, C2-C3', since these disulfide connectivities have been observed for conotoxins with cysteine framework V (for examples, see AC P0DQQ7 and AC P81755). In terms of tissue distribution, expressed by the venom duct.

It localises to the secreted. The polypeptide is Conotoxin ArMLCL-012 (Conus arenatus (Sand-dusted cone)).